The chain runs to 656 residues: Probable serine/threonine-protein kinase sky1 (656 aa).

The interval 1–127 (MSDIQQDSTS…KQGGYHPVRR (127 aa)) is disordered. Positions 16–48 (TSLGGTSLGGTSLGGTSLGGTSLGGTSLGGTSL) are enriched in gly residues. Low complexity-rich tracts occupy residues 49–64 (GGSTTTSTTTPKSTNS) and 72–89 (TSSNNNNNNNNNNNNNNE). Over residues 96-108 (AGSSNKSFMPLNN) the composition is skewed to polar residues. The Protein kinase domain occupies 135–648 (YQVVDKLGWG…AKDCLNHTWL (514 aa)). ATP is bound at residue 141–149 (LGWGHFSTV). Residues 157 to 185 (TPITTSSSSSSTTTTTTSSSSNGNGNGNG) form a disordered region. The segment covering 160-179 (TTSSSSSSTTTTTTSSSSNG) has biased composition (low complexity). ATP is bound at residue Lys-197. Asp-298 acts as the Proton acceptor in catalysis. Positions 330-454 (RTSSSNKQSQ…TTATATATTT (125 aa)) are disordered. Low complexity predominate over residues 332–355 (SSSNKQSQQQQQPQQQQSQQNIND). Basic and acidic residues-rich tracts occupy residues 383–401 (SNRDRDNNKNKNIKKDDNK) and 413–440 (ENTDNKDLNSSEENKKEEEQQQNKKEEP). The span at 441–454 (TTTTTTATATATTT) shows a compositional bias: low complexity.

Belongs to the protein kinase superfamily. CMGC Ser/Thr protein kinase family.

It carries out the reaction L-seryl-[protein] + ATP = O-phospho-L-seryl-[protein] + ADP + H(+). The enzyme catalyses L-threonyl-[protein] + ATP = O-phospho-L-threonyl-[protein] + ADP + H(+). The sequence is that of Probable serine/threonine-protein kinase sky1 (sky1) from Dictyostelium discoideum (Social amoeba).